Here is a 118-residue protein sequence, read N- to C-terminus: Large ribosomal subunit protein bL19 (118 aa).

This sequence belongs to the bacterial ribosomal protein bL19 family.

Functionally, this protein is located at the 30S-50S ribosomal subunit interface and may play a role in the structure and function of the aminoacyl-tRNA binding site. This is Large ribosomal subunit protein bL19 from Teredinibacter turnerae (strain ATCC 39867 / T7901).